A 155-amino-acid chain; its full sequence is Aspartate carbamoyltransferase regulatory chain (155 aa).

4 residues coordinate Zn(2+): Cys111, Cys116, Cys137, and Cys140.

It belongs to the PyrI family. Contains catalytic and regulatory chains. The cofactor is Zn(2+).

Involved in allosteric regulation of aspartate carbamoyltransferase. The sequence is that of Aspartate carbamoyltransferase regulatory chain from Haloarcula marismortui (strain ATCC 43049 / DSM 3752 / JCM 8966 / VKM B-1809) (Halobacterium marismortui).